Consider the following 699-residue polypeptide: Elongation factor G (699 aa).

The region spanning 8-283 is the tr-type G domain; it reads EHIRNIGICA…AVVYFLPSPI (276 aa). GTP contacts are provided by residues 17–24, 81–85, and 135–138; these read AHIDAGKT, DTPGH, and NKMD.

This sequence belongs to the TRAFAC class translation factor GTPase superfamily. Classic translation factor GTPase family. EF-G/EF-2 subfamily.

The protein resides in the cytoplasm. In terms of biological role, catalyzes the GTP-dependent ribosomal translocation step during translation elongation. During this step, the ribosome changes from the pre-translocational (PRE) to the post-translocational (POST) state as the newly formed A-site-bound peptidyl-tRNA and P-site-bound deacylated tRNA move to the P and E sites, respectively. Catalyzes the coordinated movement of the two tRNA molecules, the mRNA and conformational changes in the ribosome. This is Elongation factor G from Rickettsia akari (strain Hartford).